Here is a 196-residue protein sequence, read N- to C-terminus: UPF0340 protein TTHA0583 (196 aa).

Belongs to the UPF0340 family.

This chain is UPF0340 protein TTHA0583, found in Thermus thermophilus (strain ATCC 27634 / DSM 579 / HB8).